We begin with the raw amino-acid sequence, 410 residues long: Acetate kinase (410 aa).

Mg(2+) is bound at residue asparagine 7. Lysine 14 provides a ligand contact to ATP. Arginine 88 provides a ligand contact to substrate. Aspartate 145 acts as the Proton donor/acceptor in catalysis. Residues 203-207 (HAGNG), 278-280 (DTR), and 326-330 (GIGEN) contribute to the ATP site. Glutamate 379 is a binding site for Mg(2+).

The protein belongs to the acetokinase family. As to quaternary structure, homodimer. Mg(2+) is required as a cofactor. Requires Mn(2+) as cofactor.

The protein localises to the cytoplasm. It carries out the reaction acetate + ATP = acetyl phosphate + ADP. The protein operates within metabolic intermediate biosynthesis; acetyl-CoA biosynthesis; acetyl-CoA from acetate: step 1/2. In terms of biological role, catalyzes the formation of acetyl phosphate from acetate and ATP. Can also catalyze the reverse reaction. The protein is Acetate kinase of Aster yellows witches'-broom phytoplasma (strain AYWB).